The sequence spans 321 residues: Lipoyl synthase (321 aa).

Positions 68, 73, 79, 94, 98, 101, and 308 each coordinate [4Fe-4S] cluster. Residues 80–297 (FNHGTATFMI…KELAESIGFT (218 aa)) form the Radical SAM core domain.

Belongs to the radical SAM superfamily. Lipoyl synthase family. The cofactor is [4Fe-4S] cluster.

It is found in the cytoplasm. It catalyses the reaction [[Fe-S] cluster scaffold protein carrying a second [4Fe-4S](2+) cluster] + N(6)-octanoyl-L-lysyl-[protein] + 2 oxidized [2Fe-2S]-[ferredoxin] + 2 S-adenosyl-L-methionine + 4 H(+) = [[Fe-S] cluster scaffold protein] + N(6)-[(R)-dihydrolipoyl]-L-lysyl-[protein] + 4 Fe(3+) + 2 hydrogen sulfide + 2 5'-deoxyadenosine + 2 L-methionine + 2 reduced [2Fe-2S]-[ferredoxin]. It participates in protein modification; protein lipoylation via endogenous pathway; protein N(6)-(lipoyl)lysine from octanoyl-[acyl-carrier-protein]: step 2/2. In terms of biological role, catalyzes the radical-mediated insertion of two sulfur atoms into the C-6 and C-8 positions of the octanoyl moiety bound to the lipoyl domains of lipoate-dependent enzymes, thereby converting the octanoylated domains into lipoylated derivatives. The protein is Lipoyl synthase of Shewanella pealeana (strain ATCC 700345 / ANG-SQ1).